We begin with the raw amino-acid sequence, 517 residues long: Methylmalonyl-CoA decarboxylase subunit alpha (517 aa).

A CoA carboxyltransferase N-terminal domain is found at 4–260; sequence AAKKIQDLQK…NNMEKAPEFG (257 aa). Residues 271–513 enclose the CoA carboxyltransferase C-terminal domain; it reads ELDALMPDNP…REKLPAKKHG (243 aa).

This sequence belongs to the AccD/PCCB family. As to quaternary structure, the methylmalonyl-CoA decarboxylase is composed of four subunits: the carboxyltransferase alpha subunit (MmdA), the tunnel beta subunit (MmdB), the biotin-containing gamma subunit (MmdC) and the delta subunit (MmdD).

The protein resides in the cell membrane. It carries out the reaction (S)-methylmalonyl-CoA + Na(+)(in) + H(+)(out) = propanoyl-CoA + Na(+)(out) + CO2. Functionally, carboxyltransferase subunit of the sodium ion pump methylmalonyl-CoA decarboxylase, which converts the chemical energy of a decarboxylation reaction into an electrochemical gradient of Na(+) ions across the cytoplasmic membrane, thereby creating a sodium ion motive force that is used for ATP synthesis. The alpha subunit catalyzes the Na(+)-independent carboxyltransfer from methylmalonyl-CoA to the prosthetic biotin group located on the gamma subunit. This chain is Methylmalonyl-CoA decarboxylase subunit alpha, found in Propionigenium modestum.